The following is a 518-amino-acid chain: GMP synthase [glutamine-hydrolyzing] (518 aa).

In terms of domain architecture, Glutamine amidotransferase type-1 spans 11–203 (KIIVLDFGSQ…AFDVCQARSN (193 aa)). Cys-88 (nucleophile) is an active-site residue. Catalysis depends on residues His-177 and Glu-179. Residues 204-393 (WSMDDFIDMQ…LGMPHELVWR (190 aa)) form the GMPS ATP-PPase domain. 231–237 (SGGVDSS) lines the ATP pocket.

In terms of assembly, homodimer.

It carries out the reaction XMP + L-glutamine + ATP + H2O = GMP + L-glutamate + AMP + diphosphate + 2 H(+). It functions in the pathway purine metabolism; GMP biosynthesis; GMP from XMP (L-Gln route): step 1/1. Catalyzes the synthesis of GMP from XMP. The protein is GMP synthase [glutamine-hydrolyzing] of Ligilactobacillus salivarius (strain UCC118) (Lactobacillus salivarius).